Consider the following 417-residue polypeptide: Serine hydroxymethyltransferase 1 (417 aa).

(6S)-5,6,7,8-tetrahydrofolate contacts are provided by residues Leu121 and 125–127 (GHL). N6-(pyridoxal phosphate)lysine is present on Lys230. (6S)-5,6,7,8-tetrahydrofolate is bound at residue 355 to 357 (SPF).

Belongs to the SHMT family. Homodimer. Pyridoxal 5'-phosphate serves as cofactor.

The protein resides in the cytoplasm. It carries out the reaction (6R)-5,10-methylene-5,6,7,8-tetrahydrofolate + glycine + H2O = (6S)-5,6,7,8-tetrahydrofolate + L-serine. It participates in one-carbon metabolism; tetrahydrofolate interconversion. Its pathway is amino-acid biosynthesis; glycine biosynthesis; glycine from L-serine: step 1/1. In terms of biological role, catalyzes the reversible interconversion of serine and glycine with tetrahydrofolate (THF) serving as the one-carbon carrier. This reaction serves as the major source of one-carbon groups required for the biosynthesis of purines, thymidylate, methionine, and other important biomolecules. Also exhibits THF-independent aldolase activity toward beta-hydroxyamino acids, producing glycine and aldehydes, via a retro-aldol mechanism. In Pseudomonas putida (strain ATCC 47054 / DSM 6125 / CFBP 8728 / NCIMB 11950 / KT2440), this protein is Serine hydroxymethyltransferase 1.